Reading from the N-terminus, the 366-residue chain is Growth hormone secretagogue receptor type 1 (366 aa).

At 1–40 the chain is on the extracellular side; the sequence is MWNATPSEEPGFNLTLADLDWDASPGNDSLGDELLQLFPA. Residues asparagine 13 and asparagine 27 are each glycosylated (N-linked (GlcNAc...) asparagine). Residues 41-66 traverse the membrane as a helical segment; sequence PLLAGVTATCVALFVVGIAGNLLTML. Residues 67–72 are Cytoplasmic-facing; the sequence is VVSRFR. A helical membrane pass occupies residues 73–96; sequence ELRTTTNLYLSSMAFSDLLIFLCM. Residues 97–117 lie on the Extracellular side of the membrane; that stretch reads PLDLVRLWQYRPWNFGDLLCK. A disulfide bond links cysteine 116 and cysteine 198. A helical membrane pass occupies residues 118–139; that stretch reads LFQFVSESCTYATVLTITALSV. At 140-162 the chain is on the cytoplasmic side; the sequence is ERYFAICFPLRAKVVVTKGRVKL. The chain crosses the membrane as a helical span at residues 163-183; it reads VIFVIWAVAFCSAGPIFVLVG. At 184 to 211 the chain is on the extracellular side; it reads VEHENGTDPWDTNECRPTEFAVRSGLLT. The helical transmembrane segment at 212 to 235 threads the bilayer; that stretch reads VMVWVSSIFFFLPVFCLTVLYSLI. Residues 236–263 lie on the Cytoplasmic side of the membrane; sequence GRKLWRRRRGDAVVGASLRDQNHKQTVK. A helical transmembrane segment spans residues 264-285; that stretch reads MLAVVVFAFILCWLPFHVGRYL. Residues 286 to 302 lie on the Extracellular side of the membrane; the sequence is FSKSFEPGSLEIAQISQ. The helical transmembrane segment at 303–326 threads the bilayer; the sequence is YCNLVSFVLFYLSAAINPILYNIM. The Cytoplasmic segment spans residues 327-366; that stretch reads SKKYRVAVFRLLGFEPFSQRKLSTLKDESSRAWTESSINT.

Belongs to the G-protein coupled receptor 1 family. As to expression, pituitary and hypothalamus.

The protein localises to the cell membrane. Its function is as follows. Receptor for ghrelin, coupled to G-alpha-11 proteins. Stimulates growth hormone secretion. Also binds other growth hormone releasing peptides (GHRP) (e.g. Met-enkephalin and GHRP-6) as well as non-peptide, low molecular weight secretagogues (e.g. L-692,429, MK-0677, adenosine). The protein is Growth hormone secretagogue receptor type 1 (GHSR) of Homo sapiens (Human).